Consider the following 509-residue polypeptide: Protein disulfide-isomerase (509 aa).

Residues 1-19 form the signal peptide; it reads MLSRSLLCLALAWVARVGA. Positions 20 to 136 constitute a Thioredoxin 1 domain; sequence DAPEEEDNVL…IVNWLKKRTG (117 aa). Residues cysteine 55 and cysteine 58 each act as nucleophile in the active site. Cysteine 55 and cysteine 58 are disulfide-bonded. Residue lysine 202 is modified to N6-acetyllysine. N6-succinyllysine occurs at positions 224 and 273. Serine 333 and serine 359 each carry phosphoserine. A Thioredoxin 2 domain is found at 335–477; the sequence is ELTAEKITEF…FKKFLESGGQ (143 aa). Residues cysteine 399 and cysteine 402 each act as nucleophile in the active site. A disulfide bridge connects residues cysteine 399 and cysteine 402. Residue serine 429 is modified to Phosphoserine. Residues 473–509 are disordered; sequence ESGGQDGAGDDDDVDLEEALEPDMEEDDDQKAVKDEL. Acidic residues predominate over residues 480–501; that stretch reads AGDDDDVDLEEALEPDMEEDDD. Residues 506–509 carry the Prevents secretion from ER motif; the sequence is KDEL.

This sequence belongs to the protein disulfide isomerase family. Heterodimer; heterodimerizes with the protein microsomal triglyceride transfer MTTP. Homodimer. Homodimer. Monomers and homotetramers may also occur. Interacts with P4HA2, forming a heterotetramer consisting of 2 alpha subunits (P4HA2) and 2 beta (P4HB), where P4HB plays the role of a structural subunit; this tetramer catalyzes the formation of 4-hydroxyproline in collagen. Also constitutes the structural subunit of the microsomal triacylglycerol transfer protein MTTP in mammalian cells. Stabilizes both enzymes and retain them in the ER without contributing to the catalytic activity. Binds UBQLN1. Interacts with ERO1B. Interacts with ILDR2. Interacts with ERN1/IRE1A (via N-terminus); the interaction is enhanced by phosphorylation of P4HB by FAM20C in response to endoplasmic reticulum stress and results in attenuation of ERN1 activity. Phosphorylation of Ser-359 by FAM20C is induced by endoplasmic reticulum stress and results in a functional switch from oxidoreductase to molecular chaperone. It also promotes interaction with ERN1.

It is found in the endoplasmic reticulum. It localises to the endoplasmic reticulum lumen. The protein localises to the melanosome. The protein resides in the cell membrane. The enzyme catalyses Catalyzes the rearrangement of -S-S- bonds in proteins.. Its function is as follows. This multifunctional protein catalyzes the formation, breakage and rearrangement of disulfide bonds. At the cell surface, seems to act as a reductase that cleaves disulfide bonds of proteins attached to the cell. May therefore cause structural modifications of exofacial proteins. Inside the cell, seems to form/rearrange disulfide bonds of nascent proteins. At high concentrations and following phosphorylation by FAM20C, functions as a chaperone that inhibits aggregation of misfolded proteins. At low concentrations, facilitates aggregation (anti-chaperone activity). May be involved with other chaperones in the structural modification of the TG precursor in hormone biogenesis. Also acts as a structural subunit of various enzymes such as prolyl 4-hydroxylase and microsomal triacylglycerol transfer protein MTTP. Receptor for LGALS9; the interaction retains P4HB at the cell surface of Th2 T helper cells, increasing disulfide reductase activity at the plasma membrane, altering the plasma membrane redox state and enhancing cell migration. In Cricetulus griseus (Chinese hamster), this protein is Protein disulfide-isomerase (P4HB).